Reading from the N-terminus, the 385-residue chain is Aspartate carbamoyltransferase 2, chloroplastic (385 aa).

The N-terminal 30 residues, Met-1–Ser-30, are a transit peptide targeting the chloroplast. Residues Arg-131 and Thr-132 each coordinate carbamoyl phosphate. Residues Arg-131 and Thr-132 each coordinate UMP. Lys-161 provides a ligand contact to L-aspartate. Carbamoyl phosphate contacts are provided by Arg-182, His-210, and Gln-213. 2 residues coordinate UMP: Arg-182 and His-210. UMP contacts are provided by Arg-243 and Arg-305. 2 residues coordinate L-aspartate: Arg-243 and Arg-305. Carbamoyl phosphate contacts are provided by Leu-345 and Pro-346.

The protein belongs to the aspartate/ornithine carbamoyltransferase superfamily. ATCase family. In terms of assembly, homotrimer.

It localises to the plastid. Its subcellular location is the chloroplast. The catalysed reaction is carbamoyl phosphate + L-aspartate = N-carbamoyl-L-aspartate + phosphate + H(+). Its pathway is pyrimidine metabolism; UMP biosynthesis via de novo pathway; (S)-dihydroorotate from bicarbonate: step 2/3. Feedback inhibited by UMP. Catalyzes the condensation of carbamoyl phosphate and aspartate to form carbamoyl aspartate and inorganic phosphate, the committed step in the de novo pyrimidine nucleotide biosynthesis pathway. The sequence is that of Aspartate carbamoyltransferase 2, chloroplastic (PYRB2) from Pisum sativum (Garden pea).